A 362-amino-acid polypeptide reads, in one-letter code: Phosphoserine aminotransferase (362 aa).

Arg-43 contributes to the L-glutamate binding site. Pyridoxal 5'-phosphate-binding positions include 77-78 (AR), Trp-103, Thr-153, Asp-173, and Gln-196. N6-(pyridoxal phosphate)lysine is present on Lys-197.

This sequence belongs to the class-V pyridoxal-phosphate-dependent aminotransferase family. SerC subfamily. In terms of assembly, homodimer. Requires pyridoxal 5'-phosphate as cofactor.

Its subcellular location is the cytoplasm. The enzyme catalyses O-phospho-L-serine + 2-oxoglutarate = 3-phosphooxypyruvate + L-glutamate. The catalysed reaction is 4-(phosphooxy)-L-threonine + 2-oxoglutarate = (R)-3-hydroxy-2-oxo-4-phosphooxybutanoate + L-glutamate. Its pathway is amino-acid biosynthesis; L-serine biosynthesis; L-serine from 3-phospho-D-glycerate: step 2/3. The protein operates within cofactor biosynthesis; pyridoxine 5'-phosphate biosynthesis; pyridoxine 5'-phosphate from D-erythrose 4-phosphate: step 3/5. Its function is as follows. Catalyzes the reversible conversion of 3-phosphohydroxypyruvate to phosphoserine and of 3-hydroxy-2-oxo-4-phosphonooxybutanoate to phosphohydroxythreonine. The polypeptide is Phosphoserine aminotransferase (Legionella pneumophila (strain Paris)).